A 677-amino-acid chain; its full sequence is Methionine--tRNA ligase (677 aa).

Positions proline 15–histidine 25 match the 'HIGH' region motif. Residues cysteine 146, cysteine 149, cysteine 159, and cysteine 162 each contribute to the Zn(2+) site. The 'KMSKS' region motif lies at lysine 333–serine 337. Lysine 336 contributes to the ATP binding site. The 103-residue stretch at aspartate 575 to lysine 677 folds into the tRNA-binding domain.

Belongs to the class-I aminoacyl-tRNA synthetase family. MetG type 1 subfamily. In terms of assembly, homodimer. It depends on Zn(2+) as a cofactor.

The protein resides in the cytoplasm. It carries out the reaction tRNA(Met) + L-methionine + ATP = L-methionyl-tRNA(Met) + AMP + diphosphate. Functionally, is required not only for elongation of protein synthesis but also for the initiation of all mRNA translation through initiator tRNA(fMet) aminoacylation. The polypeptide is Methionine--tRNA ligase (Salmonella schwarzengrund (strain CVM19633)).